A 294-amino-acid chain; its full sequence is MHALVPFLLALAWDLTLGEPPAKLHPVVWFGRIAGFIDSRYKRRSPVLDFTAGLLTALVVITFAFLLSIVPFYAPFPLNYFLAAYLLKSSFAIKSLHEHVSRTITDDIEEKRRAVSMIVSRNTKVLDEAHLNSAAIESLAENLNDSVVAPLFYFLLFGLQGAVIYRAVNTLDAMLGYRNERYEFFGKFSARLDDALNFIPARLTVLLYLPLGGRKVPEYYRLARFKINSDKPMAAMSAVLGVWLEKPGVYRFPGKEPKNEDIKRALRIYWLVVTGWVIVVVLLLATGVCPCLSL.

4 consecutive transmembrane segments (helical) span residues 52-72 (AGLLTALVVITFAFLLSIVPF), 73-93 (YAPFPLNYFLAAYLLKSSFAI), 145-165 (DSVVAPLFYFLLFGLQGAVIY), and 268-288 (IYWLVVTGWVIVVVLLLATGV).

It belongs to the CobD/CbiB family.

It is found in the cell membrane. It functions in the pathway cofactor biosynthesis; adenosylcobalamin biosynthesis. Converts cobyric acid to cobinamide by the addition of aminopropanol on the F carboxylic group. This chain is Probable cobalamin biosynthesis protein CobD, found in Thermococcus kodakarensis (strain ATCC BAA-918 / JCM 12380 / KOD1) (Pyrococcus kodakaraensis (strain KOD1)).